The sequence spans 392 residues: Probable protein phosphatase 2C 78 (392 aa).

The PPM-type phosphatase domain maps to 39–342 (ASGEYSIAVA…DDITVVVVYL (304 aa)). Residues Asp-73, Gly-74, Asp-274, and Asp-333 each contribute to the Mn(2+) site.

This sequence belongs to the PP2C family. Mg(2+) is required as a cofactor. The cofactor is Mn(2+).

The catalysed reaction is O-phospho-L-seryl-[protein] + H2O = L-seryl-[protein] + phosphate. The enzyme catalyses O-phospho-L-threonyl-[protein] + H2O = L-threonyl-[protein] + phosphate. The sequence is that of Probable protein phosphatase 2C 78 from Oryza sativa subsp. japonica (Rice).